We begin with the raw amino-acid sequence, 406 residues long: S-adenosylmethionine synthase (406 aa).

An ATP-binding site is contributed by H17. Residue D19 coordinates Mg(2+). Residue E45 coordinates K(+). The L-methionine site is built by E58 and Q101. The interval 101-111 (QSAEINQGVAR) is flexible loop. ATP contacts are provided by residues 178-180 (DGK), D258, 264-265 (RK), A281, and K285. D258 contributes to the L-methionine binding site. Residue K289 participates in L-methionine binding.

This sequence belongs to the AdoMet synthase family. In terms of assembly, homotetramer; dimer of dimers. Mg(2+) serves as cofactor. Requires K(+) as cofactor.

It localises to the cytoplasm. It carries out the reaction L-methionine + ATP + H2O = S-adenosyl-L-methionine + phosphate + diphosphate. The protein operates within amino-acid biosynthesis; S-adenosyl-L-methionine biosynthesis; S-adenosyl-L-methionine from L-methionine: step 1/1. Catalyzes the formation of S-adenosylmethionine (AdoMet) from methionine and ATP. The overall synthetic reaction is composed of two sequential steps, AdoMet formation and the subsequent tripolyphosphate hydrolysis which occurs prior to release of AdoMet from the enzyme. The sequence is that of S-adenosylmethionine synthase from Bifidobacterium longum subsp. infantis (strain ATCC 15697 / DSM 20088 / JCM 1222 / NCTC 11817 / S12).